A 208-amino-acid polypeptide reads, in one-letter code: FMN-dependent NADH:quinone oxidoreductase (208 aa).

Residues serine 9, 15 to 17 (SAS), 96 to 99 (MYNF), and 140 to 143 (TRGG) contribute to the FMN site.

Belongs to the azoreductase type 1 family. As to quaternary structure, homodimer. FMN serves as cofactor.

It carries out the reaction 2 a quinone + NADH + H(+) = 2 a 1,4-benzosemiquinone + NAD(+). The catalysed reaction is N,N-dimethyl-1,4-phenylenediamine + anthranilate + 2 NAD(+) = 2-(4-dimethylaminophenyl)diazenylbenzoate + 2 NADH + 2 H(+). Quinone reductase that provides resistance to thiol-specific stress caused by electrophilic quinones. Its function is as follows. Also exhibits azoreductase activity. Catalyzes the reductive cleavage of the azo bond in aromatic azo compounds to the corresponding amines. This Ralstonia nicotianae (strain ATCC BAA-1114 / GMI1000) (Ralstonia solanacearum) protein is FMN-dependent NADH:quinone oxidoreductase.